Here is an 80-residue protein sequence, read N- to C-terminus: Exodeoxyribonuclease 7 small subunit (80 aa).

It belongs to the XseB family. In terms of assembly, heterooligomer composed of large and small subunits.

Its subcellular location is the cytoplasm. It carries out the reaction Exonucleolytic cleavage in either 5'- to 3'- or 3'- to 5'-direction to yield nucleoside 5'-phosphates.. Bidirectionally degrades single-stranded DNA into large acid-insoluble oligonucleotides, which are then degraded further into small acid-soluble oligonucleotides. This is Exodeoxyribonuclease 7 small subunit from Rickettsia canadensis (strain McKiel).